We begin with the raw amino-acid sequence, 297 residues long: Bifunctional protein FolD (297 aa).

NADP(+)-binding positions include 166–168, serine 191, and isoleucine 232; that span reads GRS.

It belongs to the tetrahydrofolate dehydrogenase/cyclohydrolase family. Homodimer.

The catalysed reaction is (6R)-5,10-methylene-5,6,7,8-tetrahydrofolate + NADP(+) = (6R)-5,10-methenyltetrahydrofolate + NADPH. The enzyme catalyses (6R)-5,10-methenyltetrahydrofolate + H2O = (6R)-10-formyltetrahydrofolate + H(+). Its pathway is one-carbon metabolism; tetrahydrofolate interconversion. Catalyzes the oxidation of 5,10-methylenetetrahydrofolate to 5,10-methenyltetrahydrofolate and then the hydrolysis of 5,10-methenyltetrahydrofolate to 10-formyltetrahydrofolate. This Phenylobacterium zucineum (strain HLK1) protein is Bifunctional protein FolD.